The primary structure comprises 545 residues: B3 domain-containing protein Os03g0620500 (545 aa).

A DNA-binding region (TF-B3 1) is located at residues 26–119; sequence MKCFHRQMSA…RRASGVQERN (94 aa). Residues 111-188 are disordered; sequence RASGVQERNA…SSSEHESSYD (78 aa). The segment covering 173–186 has biased composition (basic and acidic residues); that stretch reads EEAKESSSSEHESS. Residues 231 to 331 constitute a DNA-binding region (TF-B3 2); it reads VTTMKHSNVN…RATVHLLRET (101 aa). The disordered stretch occupies residues 368 to 400; it reads RRGTMEPSTTNVKKEADNEQCNNGQGKRQEPLN. Positions 441 to 542 form a DNA-binding region, TF-B3 3; it reads YVSIMNKSNV…AMKVHIIRHN (102 aa).

It localises to the nucleus. The sequence is that of B3 domain-containing protein Os03g0620500 from Oryza sativa subsp. japonica (Rice).